We begin with the raw amino-acid sequence, 192 residues long: UPF0312 protein PputGB1_5030 (192 aa).

Positions 1–23 (MLKKTFAALALGTALLSAGQAMA) are cleaved as a signal peptide.

It belongs to the UPF0312 family. Type 1 subfamily.

It localises to the periplasm. The protein is UPF0312 protein PputGB1_5030 of Pseudomonas putida (strain GB-1).